Reading from the N-terminus, the 311-residue chain is Protease HtpX homolog 1 (311 aa).

The next 2 helical transmembrane spans lie at 12-32 (VISLGLTIISEGIVLIGIASL) and 35-55 (ISLFFIFPALVIFWLFQWIIS). Zn(2+) is bound at residue His-137. Residue Glu-138 is part of the active site. A Zn(2+)-binding site is contributed by His-141. 2 helical membrane passes run 159-179 (VLGYISTLLMNFGYLALFLAA) and 184-204 (LLFAIAALAIGFVIFVVTFIL). Position 216 (Glu-216) interacts with Zn(2+).

It belongs to the peptidase M48B family. The cofactor is Zn(2+).

The protein resides in the cell membrane. This is Protease HtpX homolog 1 from Saccharolobus solfataricus (strain ATCC 35092 / DSM 1617 / JCM 11322 / P2) (Sulfolobus solfataricus).